The following is a 159-amino-acid chain: Probable NADH dehydrogenase [ubiquinone] 1 alpha subcomplex subunit 12 (159 aa).

Belongs to the complex I NDUFA12 subunit family. As to quaternary structure, complex I is composed of at least 49 different subunits.

It localises to the mitochondrion inner membrane. Accessory subunit of the mitochondrial membrane respiratory chain NADH dehydrogenase (Complex I), that is believed not to be involved in catalysis. Complex I functions in the transfer of electrons from NADH to the respiratory chain. The immediate electron acceptor for the enzyme is believed to be ubiquinone. In Arabidopsis thaliana (Mouse-ear cress), this protein is Probable NADH dehydrogenase [ubiquinone] 1 alpha subcomplex subunit 12.